Reading from the N-terminus, the 340-residue chain is Spermidine synthase 2 (340 aa).

Residues 1–41 form a disordered region; the sequence is MSSTQEASVTDLPVKRPREAEEDNNGGAMETENGGGEIKEP. Residue Ser2 is modified to N-acetylserine. A PABS domain is found at 49–286; sequence PGWFSEISPM…GVIGFMLCSS (238 aa). Gln80 is an S-adenosyl 3-(methylsulfanyl)propylamine binding site. Tyr110 serves as a coordination point for putrescine. Residues Gln111, Asp135, Glu155, 186–187, and Asp205 each bind S-adenosyl 3-(methylsulfanyl)propylamine; that span reads DG. The Proton acceptor role is filled by Asp205. Residues 205-208 and Tyr274 each bind putrescine; that span reads DSSD.

It belongs to the spermidine/spermine synthase family. In terms of assembly, heterodimer. Component of a multiprotein complex. Interacts with SPMS and SPDSYN1.

The catalysed reaction is S-adenosyl 3-(methylsulfanyl)propylamine + putrescine = S-methyl-5'-thioadenosine + spermidine + H(+). The protein operates within amine and polyamine biosynthesis; spermidine biosynthesis; spermidine from putrescine: step 1/1. The protein is Spermidine synthase 2 (SPDSYN2) of Arabidopsis thaliana (Mouse-ear cress).